Here is a 436-residue protein sequence, read N- to C-terminus: Tryptophan synthase beta chain (436 aa).

Lysine 129 bears the N6-(pyridoxal phosphate)lysine mark.

Belongs to the TrpB family. In terms of assembly, tetramer of two alpha and two beta chains. Pyridoxal 5'-phosphate serves as cofactor.

It carries out the reaction (1S,2R)-1-C-(indol-3-yl)glycerol 3-phosphate + L-serine = D-glyceraldehyde 3-phosphate + L-tryptophan + H2O. The protein operates within amino-acid biosynthesis; L-tryptophan biosynthesis; L-tryptophan from chorismate: step 5/5. Its function is as follows. The beta subunit is responsible for the synthesis of L-tryptophan from indole and L-serine. This Prochlorococcus marinus (strain MIT 9313) protein is Tryptophan synthase beta chain.